The following is a 182-amino-acid chain: ATP synthase subunit delta, organellar chromatophore (182 aa).

It belongs to the ATPase delta chain family. As to quaternary structure, F-type ATPases have 2 components, F(1) - the catalytic core - and F(0) - the membrane proton channel. F(1) has five subunits: alpha(3), beta(3), gamma(1), delta(1), epsilon(1). CF(0) has four main subunits: a(1), b(1), b'(1) and c(10-14). The alpha and beta chains form an alternating ring which encloses part of the gamma chain. F(1) is attached to F(0) by a central stalk formed by the gamma and epsilon chains, while a peripheral stalk is formed by the delta, b and b' chains.

The protein localises to the plastid. It is found in the organellar chromatophore thylakoid membrane. F(1)F(0) ATP synthase produces ATP from ADP in the presence of a proton or sodium gradient. F-type ATPases consist of two structural domains, F(1) containing the extramembraneous catalytic core and F(0) containing the membrane proton channel, linked together by a central stalk and a peripheral stalk. During catalysis, ATP synthesis in the catalytic domain of F(1) is coupled via a rotary mechanism of the central stalk subunits to proton translocation. Its function is as follows. This protein is part of the stalk that links CF(0) to CF(1). It either transmits conformational changes from CF(0) to CF(1) or is implicated in proton conduction. The protein is ATP synthase subunit delta, organellar chromatophore of Paulinella chromatophora.